We begin with the raw amino-acid sequence, 79 residues long: Small ribosomal subunit protein uS17 (79 aa).

The protein belongs to the universal ribosomal protein uS17 family. As to quaternary structure, part of the 30S ribosomal subunit.

In terms of biological role, one of the primary rRNA binding proteins, it binds specifically to the 5'-end of 16S ribosomal RNA. The chain is Small ribosomal subunit protein uS17 from Rhizobium etli (strain CIAT 652).